Here is a 177-residue protein sequence, read N- to C-terminus: Ribosome rescue factor SmrB (177 aa).

Residues 22–45 (SKKLRQDTIIHQPSKNFSEQQKQR) form a disordered region. Residues 30–41 (IIHQPSKNFSEQ) are compositionally biased toward polar residues. A Smr domain is found at 98 to 173 (LDMHGMKQDE…GAGAILVLLS (76 aa)).

This sequence belongs to the SmrB family. In terms of assembly, associates with collided ribosomes, but not with correctly translating polysomes.

Its function is as follows. Acts as a ribosome collision sensor. Detects stalled/collided disomes (pairs of ribosomes where the leading ribosome is stalled and a second ribosome has collided with it) and endonucleolytically cleaves mRNA at the 5' boundary of the stalled ribosome. Stalled/collided disomes form a new interface (primarily via the 30S subunits) that binds SmrB. Cleaved mRNA becomes available for tmRNA ligation, leading to ribosomal subunit dissociation and rescue of stalled ribosomes. This Aliivibrio salmonicida (strain LFI1238) (Vibrio salmonicida (strain LFI1238)) protein is Ribosome rescue factor SmrB.